Reading from the N-terminus, the 383-residue chain is MRRTFTAEEKASVFELWKNGTGFSEIANILGSKPGTIFTMLRDTGGIKPHERKRAVAHLTLSEREEIRAGLSAKMSIRAIATALNRSPSTISREVQRNRGRRYYKAVDANNRANRMAKRPKPCLLDQNLPLRKLVLEKLEMKWSPEQISGWLRRTKPRQKTLRISPETIYKTLYFRSREALHHLNIQHLRRSHSLRHGRRHTRKGERGTINIVNGTPIHERSRNIDNRRSLGHWEGDLVSGTKNSHIATLVDRKSRYTIIVRLRGKDSVSVNQALTDKFLSLPSELRKSLTWDRGMELARHLEFTVSTGVKVYFCDPQSPWQRGTNENTNGLIRQYFPKKTCLAQYTQHELDLVAAQLNNRPRKTLKFKTPKEIIERGVALTD.

Positions 213–379 (VNGTPIHERS…TPKEIIERGV (167 aa)) constitute an Integrase catalytic domain.

The protein belongs to the transposase IS30 family.

Its function is as follows. Required for the transposition of the insertion element. The protein is Transposase InsI for insertion sequence element IS30A (insI1) of Escherichia coli (strain K12).